The following is a 364-amino-acid chain: Fructose-bisphosphate aldolase, non-muscle type (364 aa).

Residues Arg56 and Lys147 each coordinate substrate. Residue Lys230 is the Schiff-base intermediate with dihydroxyacetone-P of the active site.

Belongs to the class I fructose-bisphosphate aldolase family. In terms of assembly, homotetramer. As to expression, expressed mainly in the liver and also in brain and other tissues, except for the heart muscle.

The catalysed reaction is beta-D-fructose 1,6-bisphosphate = D-glyceraldehyde 3-phosphate + dihydroxyacetone phosphate. It functions in the pathway carbohydrate degradation; glycolysis; D-glyceraldehyde 3-phosphate and glycerone phosphate from D-glucose: step 4/4. The protein is Fructose-bisphosphate aldolase, non-muscle type of Lethenteron camtschaticum (Japanese lamprey).